Reading from the N-terminus, the 303-residue chain is Oxygen-dependent coproporphyrinogen-III oxidase (303 aa).

Ser-93 is a substrate binding site. Residues His-97 and His-107 each contribute to the a divalent metal cation site. The Proton donor role is filled by His-107. 109–111 (NIR) contributes to the substrate binding site. 2 residues coordinate a divalent metal cation: His-146 and His-176. Residues 241–276 (YVEFNLLLDRGTLFGIQSNGRIESILSSMPPLVKWE) form an important for dimerization region.

It belongs to the aerobic coproporphyrinogen-III oxidase family. In terms of assembly, homodimer. A divalent metal cation is required as a cofactor.

It is found in the cytoplasm. The enzyme catalyses coproporphyrinogen III + O2 + 2 H(+) = protoporphyrinogen IX + 2 CO2 + 2 H2O. It participates in porphyrin-containing compound metabolism; protoporphyrin-IX biosynthesis; protoporphyrinogen-IX from coproporphyrinogen-III (O2 route): step 1/1. Functionally, involved in the heme biosynthesis. Catalyzes the aerobic oxidative decarboxylation of propionate groups of rings A and B of coproporphyrinogen-III to yield the vinyl groups in protoporphyrinogen-IX. This Wigglesworthia glossinidia brevipalpis protein is Oxygen-dependent coproporphyrinogen-III oxidase.